A 129-amino-acid polypeptide reads, in one-letter code: M-zodatoxin-Lt8g (129 aa).

Positions 1-20 (MKYFVVALALVAAFACIAES) are cleaved as a signal peptide. Residues 21-60 (KPAESEHELAEVEEENELADLEDAVWLEHLADLSDLEEAR) constitute a propeptide that is removed on maturation. The short motif at 57–60 (EEAR) is the Processing quadruplet motif element.

Cleavage of the propeptide depends on the processing quadruplet motif (XXXR, with at least one of X being E). As to expression, expressed by the venom gland.

It is found in the secreted. Insecticidal, cytolytic and antimicrobial peptide. Has insecticidal activity against the flesh fly S.carnaria. Has antibacterial activity against the Gram-negative bacteria E.coli. Forms voltage-dependent, ion-permeable channels in membranes. At high concentration causes cell membrane lysis. This Lachesana tarabaevi (Spider) protein is M-zodatoxin-Lt8g (cit 1-8).